A 364-amino-acid chain; its full sequence is Dual-specificity RNA methyltransferase RlmN (364 aa).

The Proton acceptor role is filled by glutamate 91. Positions 97–333 (ESDRGTLCIS…VTVRKTRGDD (237 aa)) constitute a Radical SAM core domain. Residues cysteine 104 and cysteine 338 are joined by a disulfide bond. Cysteine 111, cysteine 115, and cysteine 118 together coordinate [4Fe-4S] cluster. Residues 164–165 (GE), serine 196, 218–220 (SLH), and asparagine 295 contribute to the S-adenosyl-L-methionine site. The active-site S-methylcysteine intermediate is the cysteine 338.

It belongs to the radical SAM superfamily. RlmN family. [4Fe-4S] cluster is required as a cofactor.

The protein resides in the cytoplasm. It carries out the reaction adenosine(2503) in 23S rRNA + 2 reduced [2Fe-2S]-[ferredoxin] + 2 S-adenosyl-L-methionine = 2-methyladenosine(2503) in 23S rRNA + 5'-deoxyadenosine + L-methionine + 2 oxidized [2Fe-2S]-[ferredoxin] + S-adenosyl-L-homocysteine. The catalysed reaction is adenosine(37) in tRNA + 2 reduced [2Fe-2S]-[ferredoxin] + 2 S-adenosyl-L-methionine = 2-methyladenosine(37) in tRNA + 5'-deoxyadenosine + L-methionine + 2 oxidized [2Fe-2S]-[ferredoxin] + S-adenosyl-L-homocysteine. Functionally, specifically methylates position 2 of adenine 2503 in 23S rRNA and position 2 of adenine 37 in tRNAs. m2A2503 modification seems to play a crucial role in the proofreading step occurring at the peptidyl transferase center and thus would serve to optimize ribosomal fidelity. The sequence is that of Dual-specificity RNA methyltransferase RlmN from Neisseria meningitidis serogroup B (strain ATCC BAA-335 / MC58).